Here is a 380-residue protein sequence, read N- to C-terminus: S-adenosylmethionine:tRNA ribosyltransferase-isomerase (380 aa).

Basic and acidic residues predominate over residues 1 to 15 (MHSKHPTDTARRCET). The segment at 1–24 (MHSKHPTDTARRCETGTDSSDTAA) is disordered.

The protein belongs to the QueA family. As to quaternary structure, monomer.

The protein localises to the cytoplasm. It catalyses the reaction 7-aminomethyl-7-carbaguanosine(34) in tRNA + S-adenosyl-L-methionine = epoxyqueuosine(34) in tRNA + adenine + L-methionine + 2 H(+). It participates in tRNA modification; tRNA-queuosine biosynthesis. Its function is as follows. Transfers and isomerizes the ribose moiety from AdoMet to the 7-aminomethyl group of 7-deazaguanine (preQ1-tRNA) to give epoxyqueuosine (oQ-tRNA). The protein is S-adenosylmethionine:tRNA ribosyltransferase-isomerase of Oleidesulfovibrio alaskensis (strain ATCC BAA-1058 / DSM 17464 / G20) (Desulfovibrio alaskensis).